Reading from the N-terminus, the 340-residue chain is Melanin-concentrating hormone receptor 2 (340 aa).

Residues 1 to 39 (MNPFHASCWNTSAELLNKSWNKEFAYQTASVVDTVILPS) lie on the Extracellular side of the membrane. 2 N-linked (GlcNAc...) asparagine glycosylation sites follow: asparagine 10 and asparagine 17. A helical transmembrane segment spans residues 40–60 (MIGIICSTGLVGNILIVFTII). The Cytoplasmic portion of the chain corresponds to 61–69 (RSRKKTVPD). The helical transmembrane segment at 70 to 90 (IYICNLAVADLVHIVGMPFLI) threads the bilayer. The Extracellular segment spans residues 91-104 (HQWARGGEWVFGGP). Residues 105–129 (LCTIITSLDTCNQFACSAIMTVMSV) form a helical membrane-spanning segment. Residues 130-154 (DRYFALVQPFRLTRWRTRYKTIRIN) lie on the Cytoplasmic side of the membrane. A helical membrane pass occupies residues 155–175 (LGLWAASFILALPVWVYSKVI). Over 176-200 (KFKDGVESCAFDLTSPDDVLWYTLY) the chain is Extracellular. The helical transmembrane segment at 201 to 221 (LTITTFFFPLPLILVCYILIL) threads the bilayer. The Cytoplasmic segment spans residues 222-252 (CYTWEMYQQNKDARCCNPSVPKQRVMKLTKM). Residues 253-273 (VLVLVVVFILSAAPYHVIQLV) traverse the membrane as a helical segment. Residues 274–288 (NLQMEQPTLAFYVGY) lie on the Extracellular side of the membrane. A helical membrane pass occupies residues 289–309 (YLSICLSYASSSINPFLYILL). The Cytoplasmic segment spans residues 310 to 340 (SGNFQKRLPQIQRRATEKEINNMGNTLKSHF).

This sequence belongs to the G-protein coupled receptor 1 family. As to expression, specifically expressed in the brain, with highest levels in cerebral cortex, hippocampus and amygdala. No expression detected in the cerebellum, thalamus or hypothalamus.

It localises to the cell membrane. Functionally, receptor for melanin-concentrating hormone, coupled to G proteins that activate phosphoinositide hydrolysis. The sequence is that of Melanin-concentrating hormone receptor 2 (MCHR2) from Homo sapiens (Human).